Consider the following 362-residue polypeptide: GTP cyclohydrolase FolE2 (362 aa).

This sequence belongs to the GTP cyclohydrolase IV family.

The enzyme catalyses GTP + H2O = 7,8-dihydroneopterin 3'-triphosphate + formate + H(+). Its pathway is cofactor biosynthesis; 7,8-dihydroneopterin triphosphate biosynthesis; 7,8-dihydroneopterin triphosphate from GTP: step 1/1. In terms of biological role, converts GTP to 7,8-dihydroneopterin triphosphate. This is GTP cyclohydrolase FolE2 from Jannaschia sp. (strain CCS1).